A 434-amino-acid chain; its full sequence is Adenylosuccinate synthetase (434 aa).

GTP-binding positions include 15–21 and 43–45; these read GDEGKGK and GHT. The active-site Proton acceptor is Asp16. Residues Asp16 and Gly43 each coordinate Mg(2+). IMP is bound by residues 16-19, 41-44, Thr133, Arg147, Gln228, Thr243, and Arg307; these read DEGK and NAGH. His44 serves as the catalytic Proton donor. Position 303–309 (303–309) interacts with substrate; it reads SVTGRAR. Residues Arg309, 335–337, and 418–420 contribute to the GTP site; these read KLD and STG.

This sequence belongs to the adenylosuccinate synthetase family. In terms of assembly, homodimer. Requires Mg(2+) as cofactor.

Its subcellular location is the cytoplasm. The enzyme catalyses IMP + L-aspartate + GTP = N(6)-(1,2-dicarboxyethyl)-AMP + GDP + phosphate + 2 H(+). The protein operates within purine metabolism; AMP biosynthesis via de novo pathway; AMP from IMP: step 1/2. In terms of biological role, plays an important role in the de novo pathway of purine nucleotide biosynthesis. Catalyzes the first committed step in the biosynthesis of AMP from IMP. This is Adenylosuccinate synthetase from Neisseria gonorrhoeae (strain NCCP11945).